A 244-amino-acid chain; its full sequence is uncharacterized protein (244 aa).

6 consecutive transmembrane segments (helical) span residues 5–27 (KFALLFTFAACFAVIVFFWLLAV), 37–59 (IVMVLLISPIFAILLAFNLSRFL), 87–106 (LVFIHLMPIAFLGALIFYYG), 116–138 (LSLFALIFALSPLLFLGISFFVA), 159–181 (FWIWIHLFVILLIIISKVLVQPS), and 196–218 (GVFNLLIIATMNAIFGVTGRMVA).

The protein resides in the cell membrane. This is an uncharacterized protein from Archaeoglobus fulgidus (strain ATCC 49558 / DSM 4304 / JCM 9628 / NBRC 100126 / VC-16).